A 68-amino-acid polypeptide reads, in one-letter code: MKPVDVRAMTEDQLKDSLLKLKEEQFKLRFQQASGQMENTARYGQIRRDIARIQTVQTERNSQEEQGS.

Belongs to the universal ribosomal protein uL29 family.

This chain is Large ribosomal subunit protein uL29, found in Maricaulis maris (strain MCS10) (Caulobacter maris).